Here is a 521-residue protein sequence, read N- to C-terminus: Colicin-E1* (521 aa).

2 disordered regions span residues 26 to 52 (NGNPDGSGSGGGGGTGGSKSESSAAIH) and 127 to 163 (SGCALQKQKKKPVKKRKRAEKSFQEAEQRRKEIEKEQ). Residues 30 to 42 (DGSGSGGGGGTGG) show a composition bias toward gly residues. The segment covering 133-145 (KQKKKPVKKRKRA) has biased composition (basic residues). Residues 146–163 (EKSFQEAEQRRKEIEKEQ) are compositionally biased toward basic and acidic residues. A run of 2 helical transmembrane segments spans residues 470–486 (AVDAGVSYVVVLLFSVL) and 493–509 (IWGIAIVTGILCAFIDK).

The protein belongs to the channel forming colicin family.

The protein resides in the cell membrane. Its function is as follows. This colicin is a channel-forming colicin. This class of transmembrane toxins depolarize the cytoplasmic membrane, leading to dissipation of cellular energy. Colicins are polypeptide toxins produced by and active against E.coli and closely related bacteria. The sequence is that of Colicin-E1* (cea) from Shigella sonnei.